Consider the following 203-residue polypeptide: Lectin (203 aa).

An N-terminal signal peptide occupies residues 1–20 (MINILHVIAGLALASVGVDA). Residues 21-53 (RQVGVGADVLHAVENTIDSITGVEASHSALEVG) constitute a propeptide that is removed on maturation.

Monomer.

N-acetyl-D-glucosamine-specific lectin. Specifically agglutinates rabbit erythrocytes. This chain is Lectin (UPL1), found in Ulva pertusa (Sea lettuce).